Consider the following 154-residue polypeptide: Major allergen Dau c 1 (154 aa).

Belongs to the BetVI family. As to quaternary structure, homodimer.

This chain is Major allergen Dau c 1, found in Daucus carota (Wild carrot).